The following is a 489-amino-acid chain: FAD-containing monooxygenase EthA (489 aa).

Residues Ser15, Glu36, 44–47 (TWDL), Asp56, and Val104 each bind FAD. 54–56 (RSD) is a binding site for NADP(+). Residues 183-189 (SGATAVT) and 207-208 (RS) contribute to the NADP(+) site.

This sequence belongs to the FAD-binding monooxygenase family. It depends on FAD as a cofactor.

It localises to the cell membrane. The enzyme catalyses ethionamide + NADPH + O2 + H(+) = ethionamide S-oxide + NADP(+) + H2O. Monooxygenase able to convert a wide range of ketones to the corresponding esters or lactones via a Baeyer-Villiger oxidation reaction. Can act on long-chain aliphatic ketones (2-hexanone to 2-dodecanone) and on aromatic ketones (phenylacetone and benzylacetone). Is also able to catalyze enantioselective sulfoxidation of methyl-p-tolylsulfide. In vivo, likely functions as a BVMO, but the exact nature of the physiological substrate(s) remains to be established. In terms of biological role, is responsible for the activation of several thiocarbamide-containing pro-drugs, such as ethionamide (ETH), isoxyl (ISO) and thiacetazone (TAC), into reactive species. The chain is FAD-containing monooxygenase EthA (ethA) from Mycobacterium bovis (strain ATCC BAA-935 / AF2122/97).